Here is a 782-residue protein sequence, read N- to C-terminus: Homeotic protein proboscipedia (782 aa).

6 disordered regions span residues 1-23, 153-195, 251-336, 358-380, 439-493, and 547-586; these read MQEV…ESPL, PQTP…VPEN, MKHK…GISS, SSVS…KDDG, IATP…QQQP, and YYNY…ADFE. The Antp-type hexapeptide motif lies at 164–169; the sequence is EYPWMK. A DNA-binding region (homeobox) is located at residues 198–257; that stretch reads PRRLRTAYTNTQLLELEKEFHFNKYLCRPRRIEIAASLDLTERQVKVWFQNRRMKHKRQT. Residues 308-321 are compositionally biased toward low complexity; sequence NNNTPSATNNNPSA. Polar residues predominate over residues 322–336; the sequence is GNLTPNSSLETGISS. Positions 452–463 are enriched in gly residues; it reads NGSGGGPAGGYF. A compositionally biased stretch (low complexity) spans 464 to 493; the sequence is PGYYPSPKQQQQVQQQQLHPQQQQLPQQQP. A compositionally biased stretch (basic residues) spans 563 to 580; it reads QQHHHHAQHHQQQQHHQN.

This sequence belongs to the Antp homeobox family. Proboscipedia subfamily.

It is found in the nucleus. In terms of biological role, sequence-specific transcription factor which is part of a developmental regulatory system that provides cells with specific positional identities on the anterior-posterior axis. Controls development of mouthparts, and labial and maxillary palps. This is Homeotic protein proboscipedia (pb) from Drosophila melanogaster (Fruit fly).